Here is a 90-residue protein sequence, read N- to C-terminus: Putative membrane protein insertion efficiency factor (90 aa).

The protein belongs to the UPF0161 family.

It is found in the cell inner membrane. Functionally, could be involved in insertion of integral membrane proteins into the membrane. This Thermosynechococcus vestitus (strain NIES-2133 / IAM M-273 / BP-1) protein is Putative membrane protein insertion efficiency factor.